Reading from the N-terminus, the 607-residue chain is UvrABC system protein C (607 aa).

In terms of domain architecture, GIY-YIG spans 16 to 94 (GRPGVYRMFD…IKEWRPPYNI (79 aa)). Positions 203-238 (QQLGNELNAEMEKAAMALNFEKAAELRDQIALLRRV) constitute a UVR domain.

It belongs to the UvrC family. Interacts with UvrB in an incision complex.

It localises to the cytoplasm. In terms of biological role, the UvrABC repair system catalyzes the recognition and processing of DNA lesions. UvrC both incises the 5' and 3' sides of the lesion. The N-terminal half is responsible for the 3' incision and the C-terminal half is responsible for the 5' incision. The sequence is that of UvrABC system protein C from Pseudomonas entomophila (strain L48).